Here is a 384-residue protein sequence, read N- to C-terminus: 1-deoxy-D-xylulose 5-phosphate reductoisomerase (384 aa).

The NADPH site is built by T10, G11, S12, I13, R37, N38, and N124. K125 lines the 1-deoxy-D-xylulose 5-phosphate pocket. An NADPH-binding site is contributed by E126. Residue D150 coordinates Mn(2+). Positions 151, 152, 176, and 199 each coordinate 1-deoxy-D-xylulose 5-phosphate. E152 is a binding site for Mn(2+). G205 is an NADPH binding site. 1-deoxy-D-xylulose 5-phosphate is bound by residues S212, N217, K218, and E221. Mn(2+) is bound at residue E221.

The protein belongs to the DXR family. The cofactor is Mg(2+). Mn(2+) serves as cofactor.

It carries out the reaction 2-C-methyl-D-erythritol 4-phosphate + NADP(+) = 1-deoxy-D-xylulose 5-phosphate + NADPH + H(+). It functions in the pathway isoprenoid biosynthesis; isopentenyl diphosphate biosynthesis via DXP pathway; isopentenyl diphosphate from 1-deoxy-D-xylulose 5-phosphate: step 1/6. Catalyzes the NADPH-dependent rearrangement and reduction of 1-deoxy-D-xylulose-5-phosphate (DXP) to 2-C-methyl-D-erythritol 4-phosphate (MEP). The sequence is that of 1-deoxy-D-xylulose 5-phosphate reductoisomerase from Clostridium perfringens (strain SM101 / Type A).